A 248-amino-acid polypeptide reads, in one-letter code: Homeobox protein BarH-like 1 (248 aa).

Positions 135-194 (GRRSRTVFTELQLMGLEKRFEKQKYLSTPDRIDLAESLGLSQLQVKTWYQNRRMKWKKIV) form a DNA-binding region, homeobox. Residues 197–248 (GGGLESPTKPKGRPKKNSIPTSEQLSEQERTREADRLSDGGASSLSDANQEE) are disordered. Positions 223 to 234 (EQERTREADRLS) are enriched in basic and acidic residues. The span at 237 to 248 (GASSLSDANQEE) shows a compositional bias: polar residues.

This sequence belongs to the BAR homeobox family.

Its subcellular location is the nucleus. Functionally, transcription factor, is involved in craniofacial development, and in stomach organogenesis. In Danio rerio (Zebrafish), this protein is Homeobox protein BarH-like 1 (barx1).